We begin with the raw amino-acid sequence, 168 residues long: MHNKRIDASQLELKEQVVDIKRVTKVVKGGRNFRFSALVIVGDENGYVGVGSGKAMEIPDAIRKGIEDAKKNLIHVPIVGTTVPHETIGIFGAGNVLIMPAKEGTGIIAGGPVRTVLELAGFKDVRAKSLGTNNAKNMVNAAINGLSQLKRAEEVAKLRGKSVEELLG.

The 64-residue stretch at 13 to 76 (LKEQVVDIKR…EDAKKNLIHV (64 aa)) folds into the S5 DRBM domain.

The protein belongs to the universal ribosomal protein uS5 family. Part of the 30S ribosomal subunit. Contacts proteins S4 and S8.

Functionally, with S4 and S12 plays an important role in translational accuracy. Located at the back of the 30S subunit body where it stabilizes the conformation of the head with respect to the body. The protein is Small ribosomal subunit protein uS5 of Alkaliphilus oremlandii (strain OhILAs) (Clostridium oremlandii (strain OhILAs)).